The following is a 507-amino-acid chain: MSILSPRQQQELNRAIVQYIGKIISDNSENLEHGEKNGVLQHQDLVDKVANLLDVPTSSEDLTTNYLEKKWSTVLRLQRKIMDLTDEVSNLKTIIEAKHANGGSEISKDKINWLPTSVFKTFPTQTHQSVNTVAVHPYLPLIMAGCSDGTLSVWNIANDDPSIPEKSIRAHSRAVNRIRWSNSPVELSVKAGASNKSYIFASCSSDLSIKIWDGNSNSQIRILTGHDHTVSSIAFSPSKPSILYSVSRDKTTKIWDSTNGYCTRTFIGHSDWVRDLDVIAAKQKSLGDFILTCSNDQSVRLSHADSGTGLCLLVGHSHVIESVRFLPMHSNAHIDKYLKENSDRFPSMPPELVSAPIYDDVLGYKYCVSAGRDNIVKLWLMPPAVVRPNAHPLPAATNNSQGWHIADLTGHQSWVKTLQVHPNGRFIFSAGDDKSIRVWDLSTLATGGRVTEVKKLMKHEGFVNDINAAPLSEPKDTTNEDILQDIESRMRCVFVSGGTDNTVRLWS.

A coiled-coil region spans residues 72–98 (STVLRLQRKIMDLTDEVSNLKTIIEAK). WD repeat units follow at residues 125 to 164 (QTHQSVNTVAVHPYLPLIMAGCSDGTLSVWNIANDDPSIP), 170 to 222 (AHSR…QIRI), 225 to 265 (GHDH…CTRT), 268 to 312 (GHSD…GLCL), 315 to 389 (GHSH…VRPN), 410 to 449 (GHQSWVKTLQVHPNGRFIFSAGDDKSIRVWDLSTLATGGR), and 474 to 507 (PKDTTNEDILQDIESRMRCVFVSGGTDNTVRLWS).

This sequence belongs to the WD repeat LIS1/nudF family. As to quaternary structure, self-associates. Interacts with NDL1 and dynein.

It is found in the cytoplasm. Its subcellular location is the cytoskeleton. The protein resides in the spindle pole. Its function is as follows. Positively regulates the activity of the minus-end directed microtubule motor protein dynein. Plays a central role in positioning the mitotic spindle at the bud neck during cell division. Targets cytoplasmic dynein to microtubule plus ends, thereby promoting dynein-mediated microtubule sliding along the bud cortex and consequently the movement of the mitotic spindle to the bud neck. This is Nuclear distribution protein PAC1 from Meyerozyma guilliermondii (strain ATCC 6260 / CBS 566 / DSM 6381 / JCM 1539 / NBRC 10279 / NRRL Y-324) (Yeast).